A 305-amino-acid polypeptide reads, in one-letter code: HTH-type transcriptional activator BauR (305 aa).

An HTH lysR-type domain is found at 15–72 (FDIRLLRIFKTIVECGSFSAAESTLGLSRSAISLHMGDLEKRLGMRLCQRGRAGFALT).

It belongs to the LysR transcriptional regulatory family.

Involved in the degradation of beta-alanine. BauR activates the transcription of the bauABCD operon. The chain is HTH-type transcriptional activator BauR (bauR) from Pseudomonas aeruginosa (strain ATCC 15692 / DSM 22644 / CIP 104116 / JCM 14847 / LMG 12228 / 1C / PRS 101 / PAO1).